The chain runs to 222 residues: uncharacterized protein (222 aa).

An HTH gntR-type domain is found at 8-77 (AKKGQIIYRY…GNAGYFVAKN (70 aa)).

This is an uncharacterized protein from Mycoplasma pneumoniae (strain ATCC 29342 / M129 / Subtype 1) (Mycoplasmoides pneumoniae).